The chain runs to 282 residues: Protoheme IX farnesyltransferase (282 aa).

The next 9 helical transmembrane spans lie at 9 to 29, 39 to 59, 79 to 99, 102 to 122, 139 to 159, 165 to 185, 210 to 230, 231 to 251, and 261 to 281; these read LAKPGIIFGNLITLTGGFLLA, LPLFVYVMIGVALMIAAGCVF, LVTGDISVIQATIYGTILLIL, LVLYYLVNLLTLWIIIIGFIV, VLGGISGAIPPVAGYTAVVNI, LALFLILFFWQIPHSYAIAML, IMLFYLALFVVSCALPAVLGS, ADLFSFIVCMLVALFWMYKSI, and VFAKTVFKFSIIVITAICLTM.

The protein belongs to the UbiA prenyltransferase family. Protoheme IX farnesyltransferase subfamily.

Its subcellular location is the cell inner membrane. It catalyses the reaction heme b + (2E,6E)-farnesyl diphosphate + H2O = Fe(II)-heme o + diphosphate. It participates in porphyrin-containing compound metabolism; heme O biosynthesis; heme O from protoheme: step 1/1. Its function is as follows. Converts heme B (protoheme IX) to heme O by substitution of the vinyl group on carbon 2 of heme B porphyrin ring with a hydroxyethyl farnesyl side group. This chain is Protoheme IX farnesyltransferase, found in Francisella tularensis subsp. holarctica (strain LVS).